Reading from the N-terminus, the 160-residue chain is Phosphopantetheine adenylyltransferase (160 aa).

S9 lines the substrate pocket. ATP contacts are provided by residues 9–10 (SL) and H17. The substrate site is built by K41, L74, and K88. ATP contacts are provided by residues 89 to 91 (GIR), E99, and 123 to 129 (YLHLSST).

It belongs to the bacterial CoaD family. In terms of assembly, homohexamer. Mg(2+) is required as a cofactor.

Its subcellular location is the cytoplasm. It carries out the reaction (R)-4'-phosphopantetheine + ATP + H(+) = 3'-dephospho-CoA + diphosphate. The protein operates within cofactor biosynthesis; coenzyme A biosynthesis; CoA from (R)-pantothenate: step 4/5. Reversibly transfers an adenylyl group from ATP to 4'-phosphopantetheine, yielding dephospho-CoA (dPCoA) and pyrophosphate. The sequence is that of Phosphopantetheine adenylyltransferase from Renibacterium salmoninarum (strain ATCC 33209 / DSM 20767 / JCM 11484 / NBRC 15589 / NCIMB 2235).